The following is a 156-amino-acid chain: RNA pyrophosphohydrolase (156 aa).

The Nudix hydrolase domain occupies 6-148 (NYRPNVAAIV…KKNIYVRVIK (143 aa)). The Nudix box signature appears at 43 to 64 (GGIDKGESVKNALFRELKEEIG).

The protein belongs to the Nudix hydrolase family. RppH subfamily. It depends on a divalent metal cation as a cofactor.

Accelerates the degradation of transcripts by removing pyrophosphate from the 5'-end of triphosphorylated RNA, leading to a more labile monophosphorylated state that can stimulate subsequent ribonuclease cleavage. The polypeptide is RNA pyrophosphohydrolase (Campylobacter jejuni subsp. jejuni serotype O:2 (strain ATCC 700819 / NCTC 11168)).